Consider the following 426-residue polypeptide: Tyrosine--tRNA ligase (426 aa).

Position 36 (tyrosine 36) interacts with L-tyrosine. The short motif at 41 to 50 is the 'HIGH' region element; it reads PTAPSLHVGH. L-tyrosine-binding residues include tyrosine 174 and glutamine 178. The 'KMSKS' region signature appears at 234-238; that stretch reads KLGKS. ATP is bound at residue lysine 237. An S4 RNA-binding domain is found at 359–416; the sequence is DGIVDLLVASGLSPSRGAARRTIDEGGVLVNNIRIQSEEWTPRTSDFLHGRWLVLRRG.

It belongs to the class-I aminoacyl-tRNA synthetase family. TyrS type 1 subfamily. Homodimer.

It is found in the cytoplasm. The enzyme catalyses tRNA(Tyr) + L-tyrosine + ATP = L-tyrosyl-tRNA(Tyr) + AMP + diphosphate + H(+). In terms of biological role, catalyzes the attachment of tyrosine to tRNA(Tyr) in a two-step reaction: tyrosine is first activated by ATP to form Tyr-AMP and then transferred to the acceptor end of tRNA(Tyr). The sequence is that of Tyrosine--tRNA ligase from Mycobacterium leprae (strain TN).